We begin with the raw amino-acid sequence, 278 residues long: Undecaprenyl-diphosphatase (278 aa).

The next 8 helical transmembrane spans lie at 2–22 (ALVEIFKAILLGIVEGITEWL), 44–64 (AFMEMFFVVIQLGAILAVVLL), 85–105 (IEMWFKIIVSCIPAGVIGLLW), 113–133 (FYNYQTVAVMLIIFGILFIVI), 150–170 (ITYTTAFMIGIFQLIAAIFPG), 189–209 (TVAAEFTFFLAIPVMFGASAL), 223–243 (LMILLIGMVVAFIVSVISIKF), and 253–273 (FKIFGWYRIILGVIVLLYFSA).

Belongs to the UppP family.

It localises to the cell membrane. It carries out the reaction di-trans,octa-cis-undecaprenyl diphosphate + H2O = di-trans,octa-cis-undecaprenyl phosphate + phosphate + H(+). Its function is as follows. Catalyzes the dephosphorylation of undecaprenyl diphosphate (UPP). Confers resistance to bacitracin. The polypeptide is Undecaprenyl-diphosphatase (Desulfitobacterium hafniense (strain DSM 10664 / DCB-2)).